A 3726-amino-acid chain; its full sequence is Histone-lysine N-methyltransferase trithorax (3726 aa).

Disordered regions lie at residues 1–247, 321–352, 371–429, and 509–624; these read MGRS…ATTS, QLNSPVVDNPSPSPPIASGSTPSVEGGIGVGG, NEVA…TAKQ, and AGAS…RSTR. 2 stretches are compositionally biased toward low complexity: residues 31-53 and 71-101; these read PAEPQQPAPESQQPSGSGSGSSA and GGASISGNTASSSAGSGNSGNGSSSGSSTGS. Residues 102–115 are compositionally biased toward gly residues; it reads GSSGSGSTNGGSVN. Positions 126-143 are enriched in basic and acidic residues; sequence LDKEAVTKDQNGDGDKTR. A compositionally biased stretch (low complexity) spans 147 to 205; it reads SSAPSGKLSAAASGKALSKSSRTFSASTSVTSSGRSSGSSPDGNSGASSDGASSGISCG. The segment covering 206–215 has biased composition (polar residues); sequence KSTAKSTEAS. A compositionally biased stretch (low complexity) spans 222–247; the sequence is TTGAGTCSSAKSSKASSGTTSEATTS. 2 stretches are compositionally biased toward low complexity: residues 384-402 and 509-525; these read AAANGAASGKGSASNGPPA and AGASSSSSNQESGSSSN. A compositionally biased stretch (acidic residues) spans 553-586; the sequence is PEDQNNAEDDEMDDDDDDEEAEEDDENEDDNDEA. Residues 587–610 are compositionally biased toward basic and acidic residues; it reads VSEKSAETEKSAGADERDPDEKQL. A DNA-binding region (nuclear receptor) is located at residues 759–884; it reads PSACSICSAV…PGMRGEAAAR (126 aa). 4 disordered regions span residues 915-937, 981-1049, 1115-1184, and 1208-1231; these read TSVKWKSSGDSTSALTSIKPNPL, LTKK…SHGV, VPSA…SSAK, and DIATSSSVTQSSNQTQGRKTKEHR. Residues 918-937 show a composition bias toward polar residues; that stretch reads KWKSSGDSTSALTSIKPNPL. Positions 986–1000 are enriched in basic and acidic residues; the sequence is SKQEKEKVKESEQSE. Low complexity predominate over residues 1031–1041; that stretch reads PQTSTTTQPSA. The segment covering 1123 to 1132 has biased composition (basic and acidic residues); sequence SPEKPTHIVT. Composition is skewed to low complexity over residues 1173-1183 and 1211-1223; these read GTASAAGGSSA and TSSSVTQSSNQTQ. PHD-type zinc fingers lie at residues 1266-1347, 1348-1393, and 1421-1482; these read RALC…CTVC, YTCN…CLKC, and GNFC…CARR. A Bromo domain is found at 1496–1663; the sequence is AVMEEFKASL…SEQFPWFQNE (168 aa). The disordered stretch occupies residues 1573–1592; it reads FKDQQQQQQQRNANMNKPRV. The segment at 1734–1774 adopts a C2HC pre-PHD-type zinc-finger fold; the sequence is TRMCLFCRKSGEGLSGEEARLLYCGHDCWVHTNCAMWSAEV. The PHD-type 4 zinc finger occupies 1795 to 1842; the sequence is IKCTVCGNRGATVGCNVRSCGEHYHYPCARSIDCAFLTDKSMYCPAHA. One can recognise an FYR N-terminal domain in the interval 1884–1941; the sequence is RVQFHIGSLEVRQLGAIVPRFSDSYEAVVPINFLCSRLYWSSKEPWKIVEYTVRTTIQ. Disordered stretches follow at residues 1991 to 2019, 2068 to 2110, 2283 to 2302, 2649 to 2669, 2866 to 2894, 3029 to 3096, and 3347 to 3381; these read GGTDWSGEFPNPNSCVPPDENTEEEPQQQ, TQAM…WPAS, CSPTMSSNETESDVSGQGMT, GGGADGNQPGSNQQPLILGGT, SNLKQSQVKGKAASGTGTTCGAPPSIASK, QHFS…PTPP, and RKEEQRTVSQEQEQSKAAIVPTAAAPEPPQPIQEP. Low complexity predominate over residues 2074-2087; it reads NQAQNQNQQAGGAN. Over residues 3032–3043 the composition is skewed to low complexity; the sequence is STSSSSSSSNCS. Polar residues predominate over residues 3044-3057; that stretch reads LPTNVVNPMQQQAP. The region spanning 3386–3470 is the FYR C-terminal domain; sequence GPHLLYEIQS…EKCSKYTPKY (85 aa). The SET domain maps to 3588–3704; it reads DYVGVFRSHI…QGEELTYDYK (117 aa). The S-adenosyl-L-methionine site is built by His-3598 and Arg-3600. Cys-3641 is subject to S-methylcysteine; by autocatalysis. S-adenosyl-L-methionine-binding positions include Tyr-3642 and 3665 to 3666; that span reads NH. Zn(2+)-binding residues include Cys-3668, Cys-3714, Cys-3716, and Cys-3721. In terms of domain architecture, Post-SET spans 3710–3726; the sequence is EKIPCSCGSKRCRKYLN.

This sequence belongs to the class V-like SAM-binding methyltransferase superfamily. Histone-lysine methyltransferase family. TRX/MLL subfamily. In terms of assembly, interacts (via SET domain) with ash1 (via SET domain). Interacts with Nup98. In terms of tissue distribution, maternal isoforms are expressed in syncytial blastoderm, confined to the ventral region fated to become mesoderm. An additional broad domain of expression arises during cellularization and is quickly resolved into four pair-rule-like stripes in the posterior half of the embryo.

The protein resides in the nucleus. Its subcellular location is the chromosome. It catalyses the reaction L-lysyl(9)-[histone H3] + 3 S-adenosyl-L-methionine = N(6),N(6),N(6)-trimethyl-L-lysyl(9)-[histone H3] + 3 S-adenosyl-L-homocysteine + 3 H(+). The enzyme catalyses L-cysteinyl-[protein] + S-adenosyl-L-methionine = S-methyl-L-cysteinyl-[protein] + S-adenosyl-L-homocysteine + H(+). Histone methyltransferase that methylates 'Lys-4' of histone H3 (H3K4me). H3K4me represents a specific tag for epigenetic transcriptional activation. Functions in segment determination through interaction with genes of bithorax (BX-C) and antennapedia (ANT-C) complexes. Acts as an activator of BX-C. Involved in the very early regulation of homeotic genes expressed only in the posterior region of the embryo. Also has auto-methylation activity on Cys-3641. The protein is Histone-lysine N-methyltransferase trithorax of Drosophila melanogaster (Fruit fly).